The primary structure comprises 765 residues: 1,4-alpha-glucan branching enzyme GlgB (765 aa).

Catalysis depends on Asp-431, which acts as the Nucleophile. The active-site Proton donor is the Glu-484.

The protein belongs to the glycosyl hydrolase 13 family. GlgB subfamily. As to quaternary structure, monomer.

It catalyses the reaction Transfers a segment of a (1-&gt;4)-alpha-D-glucan chain to a primary hydroxy group in a similar glucan chain.. The protein operates within glycan biosynthesis; glycogen biosynthesis. Catalyzes the formation of the alpha-1,6-glucosidic linkages in glycogen by scission of a 1,4-alpha-linked oligosaccharide from growing alpha-1,4-glucan chains and the subsequent attachment of the oligosaccharide to the alpha-1,6 position. The protein is 1,4-alpha-glucan branching enzyme GlgB of Synechococcus sp. (strain CC9311).